A 206-amino-acid polypeptide reads, in one-letter code: N-(5'-phosphoribosyl)anthranilate isomerase (206 aa).

Belongs to the TrpF family.

It catalyses the reaction N-(5-phospho-beta-D-ribosyl)anthranilate = 1-(2-carboxyphenylamino)-1-deoxy-D-ribulose 5-phosphate. The protein operates within amino-acid biosynthesis; L-tryptophan biosynthesis; L-tryptophan from chorismate: step 3/5. The protein is N-(5'-phosphoribosyl)anthranilate isomerase of Pseudomonas syringae pv. syringae (strain B728a).